Consider the following 492-residue polypeptide: RNA helicase CrhR (492 aa).

The Q motif motif lies at 7–35 (STFADLGLSEKRCQLLADIGFEAPTQIQT). In terms of domain architecture, Helicase ATP-binding spans 38–207 (IPLLLSGRDM…NQFLNDPALV (170 aa)). 51 to 58 (SQTGTGKT) contributes to the ATP binding site. The short motif at 155 to 158 (DEAD) is the DEAD box element. In terms of domain architecture, Helicase C-terminal spans 234-379 (KALQPILEME…VCTIPNRSQV (146 aa)). A disordered region spans residues 451–492 (VLRRGRNAGGGQNKSGGGYQGKPGKPRRSSGGRRPAYSDRQQ). Positions 457–471 (NAGGGQNKSGGGYQG) are enriched in gly residues.

It belongs to the DEAD box helicase family.

It localises to the cytoplasm. It is found in the cell inner membrane. The protein localises to the cellular thylakoid membrane. It catalyses the reaction ATP + H2O = ADP + phosphate + H(+). Its activity is regulated as follows. Helicase inhibited by the slowly-hydrolyzing ATP analog ATP-gamma-S. Protein is rapidly degraded upon shifting from 20 to 30 degrees Celsius, the degradation machinery is only transiently present in cells grown at 30 degrees Celsius, is inhibited by commercial protease inhibitors and requires full-length protein expression (the N-terminal fragment does not induce proteolysis although it can be degraded by wild-type extract). Its function is as follows. An ATP-dependent bidirectional RNA helicase with RNA-dependent ATPase activity; does not unwind dsDNA, uses only (d)ATP. Also has ATP-dependent RNA annealing activity; concurrent annealing and helicase activity promote strand-exchange activity. In vitro has low helicase processivity, annealing processivity is probably higher. Required for correct cold adaptation, probably by aiding translation of mRNAs required for photosynthesis and electron transport. Probably regulates the cold-shock-inducible expression of the GroESL chaperones. May partially regulate its own expression at both the transcriptional and post-transcriptional level (experiments used a construct expressing a 25 kDa trunacted protein which might have dominant-negative effects); is probably not directly involved in the pathway responsible for mRNA degradation. The polypeptide is RNA helicase CrhR (Synechocystis sp. (strain ATCC 27184 / PCC 6803 / Kazusa)).